A 129-amino-acid chain; its full sequence is Large ribosomal subunit protein bL21 (129 aa).

It belongs to the bacterial ribosomal protein bL21 family. Part of the 50S ribosomal subunit. Contacts protein L20.

This protein binds to 23S rRNA in the presence of protein L20. This is Large ribosomal subunit protein bL21 from Prochlorococcus marinus (strain MIT 9313).